A 326-amino-acid chain; its full sequence is Vascular endothelial growth factor D (326 aa).

The N-terminal stretch at 1–21 is a signal peptide; the sequence is MYGEWAAVNILMMSYVYLVQG. Positions 22-93 are excised as a propeptide; it reads FSIEHRAVKD…SRSTSHRSTR (72 aa). 3 cysteine pairs are disulfide-bonded: cysteine 116-cysteine 158, cysteine 147-cysteine 194, and cysteine 151-cysteine 196. Asparagine 160 and asparagine 190 each carry an N-linked (GlcNAc...) asparagine glycan. The propeptide occupies 211–326; sequence SIQIPEEDQC…CRSMVFSLSP (116 aa). The 1; approximate repeat unit spans residues 227-242; sequence CPVDMLWDNTKCKCVL. The segment at 227-317 is 4 X 16 AA repeats of C-X(10)-C-X-C-X(1,3)-C; sequence CPVDMLWDNT…KHKMFHPDTC (91 aa). Tandem repeats lie at residues 263–278 and 282–298. N-linked (GlcNAc...) asparagine glycosylation is present at asparagine 292. Residues 306–317 form a 4; truncated repeat; sequence CQKHKMFHPDTC.

This sequence belongs to the PDGF/VEGF growth factor family. As to quaternary structure, homodimer; non-covalent and antiparallel. Post-translationally, undergoes a complex proteolytic maturation which generates a variety of processed secreted forms with increased activity toward VEGFR-3 and VEGFR-2. VEGF-D first form an antiparallel homodimer linked by disulfide bonds before secretion. The fully processed VEGF-D is composed mostly of two VEGF homology domains (VHDs) bound by non-covalent interactions. Highly expressed in the spleen, kidney, lung, tongue, ovary and mammary gland.

The protein resides in the secreted. In terms of biological role, growth factor active in angiogenesis, lymphangiogenesis and endothelial cell growth, stimulating their proliferation and migration and also has effects on the permeability of blood vessels. May function in the formation of the venous and lymphatic vascular systems during embryogenesis, and also in the maintenance of differentiated lymphatic endothelium in adults. Binds and activates VEGFR-3 (Flt4) receptor. The polypeptide is Vascular endothelial growth factor D (Rattus norvegicus (Rat)).